A 329-amino-acid chain; its full sequence is Beta-ketoacyl-[acyl-carrier-protein] synthase III (329 aa).

Residues Cys114 and His255 contribute to the active site. Residues 256-260 form an ACP-binding region; that stretch reads QANQR. Asn285 is an active-site residue.

Belongs to the thiolase-like superfamily. FabH family. As to quaternary structure, homodimer.

It is found in the cytoplasm. The catalysed reaction is malonyl-[ACP] + acetyl-CoA + H(+) = 3-oxobutanoyl-[ACP] + CO2 + CoA. Its pathway is lipid metabolism; fatty acid biosynthesis. In terms of biological role, catalyzes the condensation reaction of fatty acid synthesis by the addition to an acyl acceptor of two carbons from malonyl-ACP. Catalyzes the first condensation reaction which initiates fatty acid synthesis and may therefore play a role in governing the total rate of fatty acid production. Possesses both acetoacetyl-ACP synthase and acetyl transacylase activities. Its substrate specificity determines the biosynthesis of branched-chain and/or straight-chain of fatty acids. The sequence is that of Beta-ketoacyl-[acyl-carrier-protein] synthase III from Trichodesmium erythraeum (strain IMS101).